Here is a 445-residue protein sequence, read N- to C-terminus: Phosphoglucosamine mutase (445 aa).

Ser-102 acts as the Phosphoserine intermediate in catalysis. Mg(2+) contacts are provided by Ser-102, Asp-241, Asp-243, and Asp-245. The residue at position 102 (Ser-102) is a Phosphoserine.

This sequence belongs to the phosphohexose mutase family. Requires Mg(2+) as cofactor. Post-translationally, activated by phosphorylation.

It catalyses the reaction alpha-D-glucosamine 1-phosphate = D-glucosamine 6-phosphate. Its function is as follows. Catalyzes the conversion of glucosamine-6-phosphate to glucosamine-1-phosphate. This is Phosphoglucosamine mutase from Acinetobacter baumannii (strain ACICU).